A 320-amino-acid chain; its full sequence is Malate dehydrogenase (320 aa).

NAD(+)-binding positions include 8 to 13 and Asp-33; that span reads GAGQIG. Positions 82 and 88 each coordinate substrate. NAD(+) contacts are provided by residues Asn-95 and 118 to 120; that span reads ITN. Substrate contacts are provided by Asn-120 and Arg-151. His-175 acts as the Proton acceptor in catalysis.

It belongs to the LDH/MDH superfamily. MDH type 3 family.

The catalysed reaction is (S)-malate + NAD(+) = oxaloacetate + NADH + H(+). In terms of biological role, catalyzes the reversible oxidation of malate to oxaloacetate. This chain is Malate dehydrogenase, found in Pelagibacter ubique (strain HTCC1062).